The sequence spans 103 residues: Urease subunit beta (103 aa).

The protein belongs to the urease beta subunit family. In terms of assembly, heterotrimer of UreA (gamma), UreB (beta) and UreC (alpha) subunits. Three heterotrimers associate to form the active enzyme.

It localises to the cytoplasm. It catalyses the reaction urea + 2 H2O + H(+) = hydrogencarbonate + 2 NH4(+). The protein operates within nitrogen metabolism; urea degradation; CO(2) and NH(3) from urea (urease route): step 1/1. In terms of biological role, ureolysis may allow urea to be employed as a nitrogen source for growth and produces ammonia which may protect from killing at low pH. The protein is Urease subunit beta of Streptococcus salivarius (strain 57.I).